Here is a 212-residue protein sequence, read N- to C-terminus: Phosphoribosylglycinamide formyltransferase (212 aa).

12-14 serves as a coordination point for N(1)-(5-phospho-beta-D-ribosyl)glycinamide; the sequence is GTN. (6R)-10-formyltetrahydrofolate contacts are provided by residues 90-93 and asparagine 107; that span reads MKIL. The active-site Proton donor is histidine 109.

This sequence belongs to the GART family.

The enzyme catalyses N(1)-(5-phospho-beta-D-ribosyl)glycinamide + (6R)-10-formyltetrahydrofolate = N(2)-formyl-N(1)-(5-phospho-beta-D-ribosyl)glycinamide + (6S)-5,6,7,8-tetrahydrofolate + H(+). The protein operates within purine metabolism; IMP biosynthesis via de novo pathway; N(2)-formyl-N(1)-(5-phospho-D-ribosyl)glycinamide from N(1)-(5-phospho-D-ribosyl)glycinamide (10-formyl THF route): step 1/1. Its function is as follows. Catalyzes the transfer of a formyl group from 10-formyltetrahydrofolate to 5-phospho-ribosyl-glycinamide (GAR), producing 5-phospho-ribosyl-N-formylglycinamide (FGAR) and tetrahydrofolate. This Haemophilus influenzae (strain ATCC 51907 / DSM 11121 / KW20 / Rd) protein is Phosphoribosylglycinamide formyltransferase.